Reading from the N-terminus, the 306-residue chain is Porphobilinogen deaminase (306 aa).

Cys234 is modified (S-(dipyrrolylmethanemethyl)cysteine).

It belongs to the HMBS family. As to quaternary structure, monomer. The cofactor is dipyrromethane.

The enzyme catalyses 4 porphobilinogen + H2O = hydroxymethylbilane + 4 NH4(+). The protein operates within porphyrin-containing compound metabolism; protoporphyrin-IX biosynthesis; coproporphyrinogen-III from 5-aminolevulinate: step 2/4. In terms of biological role, tetrapolymerization of the monopyrrole PBG into the hydroxymethylbilane pre-uroporphyrinogen in several discrete steps. In Mycobacteroides abscessus (strain ATCC 19977 / DSM 44196 / CCUG 20993 / CIP 104536 / JCM 13569 / NCTC 13031 / TMC 1543 / L948) (Mycobacterium abscessus), this protein is Porphobilinogen deaminase.